The primary structure comprises 351 residues: Selenide, water dikinase (351 aa).

Selenocysteine 15 is an active-site residue. Position 15 (selenocysteine 15) is a non-standard amino acid, selenocysteine. Residues lysine 18 and 47–49 (DNE) contribute to the ATP site. Residue aspartate 50 participates in Mg(2+) binding. ATP-binding positions include aspartate 67, aspartate 90, and 138 to 140 (GHS). Aspartate 90 provides a ligand contact to Mg(2+). Mg(2+) is bound at residue aspartate 227.

The protein belongs to the selenophosphate synthase 1 family. Class I subfamily. Homodimer. The cofactor is Mg(2+).

It carries out the reaction hydrogenselenide + ATP + H2O = selenophosphate + AMP + phosphate + 2 H(+). Synthesizes selenophosphate from selenide and ATP. This Nitratidesulfovibrio vulgaris (strain DP4) (Desulfovibrio vulgaris) protein is Selenide, water dikinase.